Consider the following 910-residue polypeptide: MDYENFVKSAEEINNLHNVNYLETKDLNDFNWKAAYYICKEIYDKQQINKDGYVVIGLSGGRTPIDVYKNMCLIKDIKIDKSKLIFFIIDERYKSDDHKFSNYNNIKFLFHNLNINEKEQLYKPDTTKSIVDCILDYNDKIKIMIEKYKKVDIAILGMGSDFHIASLFPNIFYNIYMNNYQNNYIYNEKTLDFINNDQDNDNLKYLKEYVYFTTTNQFDVRKRITVSLNLLANASSKIFLLNSKDKLDLWKNMLIKSYIEVNYNLYPATYLIDTSCTNENVNINNNNNNNNKNKNNYCYSNTTVISCGYENYTKSIEEIYDSKYALSLYSNSLNKEELLTIIIFGCSGDLAKKKIYPALFKLFCNNSLPKDLLIIGFARTVQDFDTFFDKIVIYLKRCLLCYEDWSISKKKDLLNGFKNRCRYFVGNYSSSESFENFNKYLTTIEEEEAKKKYYATCYKMNGSDYNISNNVAEDNISIDDENKTNEYFQMCTPKNCPDNVFSSNYNFPYVINRMLYLALPPHIFVSTLKNYKKNCLNSKGTDKILLEKPFGNDLDSFKMLSKQILENFNEQQIYRIDHYLGKDMVSGLLKLKFTNTFLLSLMNRHFIKCIKITLKETKGVYGRGQYFDPYGIIRDVMQNHMLQLLTLITMEDPIDLNDESVKNEKIKILKSIPSIKLEDTIIGQYEKAENFKEDENNDDESKKNHSYHDDPHIDKNSITPTFCTCILYINSINWYGVPIIFKSGKGLNKDICEIRIQFHNIMGSSDENMNNNEFVIILQPVEAIYLKMMIKKTGCEEMEEVQLNLTVNEKNKKINVPEAYETLLLECFKGHKKKFISDEELYESWRIFTPLLKELQEKQVKPLKYSFGSSGPKEVFGLVKKYYNYGKNYTHRPEFVRKSSFYEDDLLDIN.

The tract at residues 1–170 is 6-phosphogluconolactonase; sequence MDYENFVKSA…DFHIASLFPN (170 aa). The interval 171–276 is linker; it reads IFYNIYMNNY…PATYLIDTSC (106 aa). The tract at residues 277–910 is glucose-6-phosphate 1-dehydrogenase; the sequence is TNENVNINNN…FYEDDLLDIN (634 aa). Residues 345–352, Arg379, and Lys548 contribute to the NADP(+) site; that span reads GCSGDLAK. Residues Lys548, 578 to 582, Glu616, and Asp635 each bind D-glucose 6-phosphate; that span reads HYLGK. The Proton acceptor role is filled by His640. The interval 689 to 711 is disordered; sequence ENFKEDENNDDESKKNHSYHDDP. Residue Lys742 coordinates NADP(+). Lys745 serves as a coordination point for D-glucose 6-phosphate. Arg755 lines the NADP(+) pocket. Gln779 provides a ligand contact to D-glucose 6-phosphate. NADP(+) is bound at residue 785 to 787; sequence YLK.

It in the N-terminal section; belongs to the glucosamine/galactosamine-6-phosphate isomerase family. 6-phosphogluconolactonase subfamily. The protein in the C-terminal section; belongs to the glucose-6-phosphate dehydrogenase family. In terms of assembly, homotetramer.

It carries out the reaction 6-phospho-D-glucono-1,5-lactone + H2O = 6-phospho-D-gluconate + H(+). The enzyme catalyses D-glucose 6-phosphate + NADP(+) = 6-phospho-D-glucono-1,5-lactone + NADPH + H(+). It participates in carbohydrate degradation; pentose phosphate pathway; D-ribulose 5-phosphate from D-glucose 6-phosphate (oxidative stage): step 1/3. The protein operates within carbohydrate degradation; pentose phosphate pathway; D-ribulose 5-phosphate from D-glucose 6-phosphate (oxidative stage): step 2/3. Its activity is regulated as follows. G6PD activity is inhibited by glucosamine-6-phosphate, NADPH, and 4-(4-bromophenyl)-7-(3,4-dimethoxyphenyl)-4,6,7,8-tetrahydroquinoline-2,5(1 H,3H)-dione. G6PD and 6PGL activities can be reversibly inhibited by S-glutathionylation (in vitro). In terms of biological role, bifunctional enzyme which catalyzes the first two steps of the oxidative pentose-phosphate pathway, which represents a route for the dissimilation of carbohydrates besides glycolysis. The main function of this enzyme is to provide reducing power (NADPH) and pentose phosphates for fatty acid and nucleic acid synthesis. The protein is Bifunctional glucose-6-phosphate 1-dehydrogenase/6-phosphogluconolactonase of Plasmodium falciparum (isolate 3D7).